Reading from the N-terminus, the 1669-residue chain is Collagen alpha-1(IV) chain (1669 aa).

The N-terminal stretch at 1–27 (MGPRLSVWLLLLPAALLLHEEHSRAAA) is a signal peptide. Positions 28-172 (KGGCAGSGCG…LGHVPGMLLK (145 aa)) are cleaved as a propeptide — N-terminal propeptide (7S domain). 3 disordered regions span residues 48–459 (KGER…EIGE), 504–1382 (GRDG…PKGQ), and 1404–1431 (PGQK…DGLP). N-linked (GlcNAc...) asparagine glycosylation occurs at N126. The segment at 173–1440 (GERGFPGIPG…PGSMGPPGTP (1268 aa)) is triple-helical region. Residues 196-214 (VGPPGFTGPPGPPGPPGPP) show a composition bias toward pro residues. 3-hydroxyproline is present on residues P204, P207, and P210. The span at 234-249 (QGVSGPPGVPGQAQVQ) shows a compositional bias: low complexity. Basic and acidic residues-rich tracts occupy residues 250-263 (EKGD…KGQK) and 289-298 (PGKDGDKGEK). Composition is skewed to pro residues over residues 367–376 (PGQPGPPGLP), 413–424 (PGPPGSPGPPGQ), and 436–448 (PGPP…PGIP). Residues 535–545 (FDLRLKGDKGD) show a composition bias toward basic and acidic residues. Positions 586–595 (GPPGGVGFPG) are enriched in gly residues. 3-hydroxyproline is present on residues P587 and P602. P603 carries the post-translational modification 4-hydroxyproline. P605 carries the 3-hydroxyproline modification. P606 bears the 4-hydroxyproline mark. A compositionally biased stretch (low complexity) spans 611-620 (AGPIGDKGQA). The span at 621 to 630 (GFPGGPGSPG) shows a compositional bias: gly residues. A 4-hydroxyproline mark is found at P623, P626, P629, and P632. P647 is modified (3-hydroxyproline). The span at 797–817 (GVPGIGPPGARGPPGGQGPPG) shows a compositional bias: gly residues. Composition is skewed to low complexity over residues 856 to 875 (QSGL…PGFP) and 977 to 986 (PGKDGQAGQP). Gly residues predominate over residues 1011–1020 (GSVGGMGLPG). Residues 1086–1114 (SIGIPGMPGSPGLKGSPGSVGYPGSPGLP) are compositionally biased toward low complexity. P1214 carries the post-translational modification 3-hydroxyproline. Pro residues predominate over residues 1247 to 1258 (PGLPGPMGPPGL). A compositionally biased stretch (gly residues) spans 1290-1299 (GMPGIGGSPG). Residues 1368–1382 (PGLKGLQGLPGPKGQ) are compositionally biased toward low complexity. At P1424 the chain carries 3-hydroxyproline. Positions 1445–1669 (GFLVTRHSQT…SRCQVCMRRT (225 aa)) constitute a Collagen IV NC1 domain. Cystine bridges form between C1460-C1551, C1493-C1548, C1505-C1511, C1570-C1665, C1604-C1662, and C1616-C1622. An S-Lysyl-methionine sulfilimine (Met-Lys) (interchain with K-1651) cross-link involves residue M1533. Residue K1651 forms an S-Lysyl-methionine sulfilimine (Lys-Met) (interchain with M-1533) linkage.

Belongs to the type IV collagen family. There are six type IV collagen isoforms, alpha 1(IV)-alpha 6(IV), each of which can form a triple helix structure with 2 other chains to generate type IV collagen network. Interacts with EFEMP2. Post-translationally, lysines at the third position of the tripeptide repeating unit (G-X-Y) are hydroxylated. The modified lysines can be O-glycosylated. In terms of processing, contains 4-hydroxyproline. Prolines at the third position of the tripeptide repeating unit (G-X-Y) are hydroxylated in some or all of the chains. Contains 3-hydroxyproline. This modification occurs on the first proline residue in the sequence motif Gly-Pro-Hyp, where Hyp is 4-hydroxyproline. Post-translationally, type IV collagens contain numerous cysteine residues which are involved in inter- and intramolecular disulfide bonding. 12 of these, located in the NC1 domain, are conserved in all known type IV collagens. In terms of processing, the trimeric structure of the NC1 domains is stabilized by covalent bonds (sulfilimine cross-links) between Lys and Met residues. These cross-links are important for the mechanical stability of the basement membrane. Sulfilimine cross-link is catalyzed by PXDN. Proteolytic processing produces the C-terminal NC1 peptide, arresten. As to expression, highly expressed in placenta.

The protein localises to the secreted. The protein resides in the extracellular space. Its subcellular location is the extracellular matrix. It is found in the basement membrane. Functionally, type IV collagen is the major structural component of glomerular basement membranes (GBM), forming a 'chicken-wire' meshwork together with laminins, proteoglycans and entactin/nidogen. Its function is as follows. Arresten, comprising the C-terminal NC1 domain, inhibits angiogenesis and tumor formation. The C-terminal half is found to possess the anti-angiogenic activity. Specifically inhibits endothelial cell proliferation, migration and tube formation. In Homo sapiens (Human), this protein is Collagen alpha-1(IV) chain.